A 712-amino-acid chain; its full sequence is MSMSDIQQRPQIPTTTTAAVAAAASTNVNTGAATTSTATTGNTPTTTPTSPIENISKVPVKPSVDVPVKPKLEQQQQQQSEQSSKPPPPPPEQQQQHQLPTPPIKPPKTGTTSSSSSTTTSSATSSKISMSGPVCGNCQTQTTPLWRRDETGQVLCNACGLFLKLHGRPRPISLKTDTIKSRNRVKQNGSNSQSSKSSGANTPELKSKEGKSGKKSPKSKKKSLGNGNGNGNSSHDHNTLTPLLPATSNNTPTFKSTTSQSQHQQNQNHHHQHHNHHHHLPNHVLQTHQVPLHYPSSTPTQFAPGLQRITSPLLLSTTSSSSSIRTEPNNNNTSKLTPIQAAAGALENMSNELGPSATFKKGNNINGISLMNKTKKDVSSINGSSTSLSSSSASSSIFSSVAPSTSSSSSLSNGTTINNPAPKLPTLGSKISSPSSQPFTRSTTPLQTLPPLHKIASHESSLPPLHNISTYNNNNSGGGADGGQQSMANYSQTNRSPINGNQDNNNNNNNNNNNNNNGNNNGNNNSNNNGNNFTASAHEVTLLKTRISELELVNDLYRTRIMELEAMEQAARLRENSMKKRLDEVMNLQINYQNLLNNNGGMSSQTQPQPSQQPQQAGQYYSNNNNNNNNDQGSQSISPNVSITGSTTITSPNSRSKIISETTPTHHQQQQGGVGAGDNESIILPPLKRNRTDELTDANGNGNGNDNKKVKI.

Residues 1–13 show a composition bias toward polar residues; sequence MSMSDIQQRPQIP. 5 disordered regions span residues 1–20, 27–135, 173–280, 377–533, and 596–712; these read MSMSDIQQRPQIPTTTTAAV, NVNT…GPVC, SLKT…HHHL, DVSS…GNNF, and LNNN…KVKI. Composition is skewed to low complexity over residues 27–84 and 107–131; these read NVNT…EQSS and PKTGTTSSSSSTTTSSATSSKISMS. The segment at 135 to 159 adopts a GATA-type zinc-finger fold; it reads CGNCQTQTTPLWRRDETGQVLCNAC. Residues 186–199 show a composition bias toward low complexity; the sequence is KQNGSNSQSSKSSG. Positions 213 to 223 are enriched in basic residues; it reads GKKSPKSKKKS. Residues 246-261 show a composition bias toward polar residues; that stretch reads ATSNNTPTFKSTTSQS. The segment covering 268–280 has biased composition (basic residues); it reads NHHHQHHNHHHHL. Residues 379–414 are compositionally biased toward low complexity; it reads SSINGSSTSLSSSSASSSIFSSVAPSTSSSSSLSNG. 2 stretches are compositionally biased toward polar residues: residues 429–447 and 484–498; these read SKISSPSSQPFTRSTTPLQ and QQSMANYSQTNRSPI. Composition is skewed to low complexity over residues 499–532 and 596–616; these read NGNQDNNNNNNNNNNNNNNGNNNGNNNSNNNGNN and LNNNGGMSSQTQPQPSQQPQQ. The stretch at 545-598 forms a coiled coil; that stretch reads TRISELELVNDLYRTRIMELEAMEQAARLRENSMKKRLDEVMNLQINYQNLLNN. Over residues 631 to 667 the composition is skewed to polar residues; that stretch reads DQGSQSISPNVSITGSTTITSPNSRSKIISETTPTHH.

It localises to the nucleus. Functionally, probable transcription factor involved in response to fluconazole, LiCl, and copper. The polypeptide is Transcriptional regulator GZF3 (GZF3) (Candida albicans (strain SC5314 / ATCC MYA-2876) (Yeast)).